Here is a 605-residue protein sequence, read N- to C-terminus: Aspartate--tRNA(Asp/Asn) ligase (605 aa).

An L-aspartate-binding site is contributed by glutamate 176. Residues 200-203 form an aspartate region; that stretch reads QQFK. Positions 222 and 452 each coordinate L-aspartate. ATP is bound at residue 222–224; sequence RDE. Glutamate 490 contributes to the ATP binding site. Arginine 497 serves as a coordination point for L-aspartate. 542-545 contacts ATP; sequence GIDR.

This sequence belongs to the class-II aminoacyl-tRNA synthetase family. Type 1 subfamily. As to quaternary structure, homodimer.

Its subcellular location is the cytoplasm. The catalysed reaction is tRNA(Asx) + L-aspartate + ATP = L-aspartyl-tRNA(Asx) + AMP + diphosphate. In terms of biological role, aspartyl-tRNA synthetase with relaxed tRNA specificity since it is able to aspartylate not only its cognate tRNA(Asp) but also tRNA(Asn). Reaction proceeds in two steps: L-aspartate is first activated by ATP to form Asp-AMP and then transferred to the acceptor end of tRNA(Asp/Asn). The chain is Aspartate--tRNA(Asp/Asn) ligase from Rickettsia prowazekii (strain Madrid E).